A 259-amino-acid chain; its full sequence is 3-deoxy-manno-octulosonate cytidylyltransferase (259 aa).

This sequence belongs to the KdsB family.

The protein localises to the cytoplasm. It carries out the reaction 3-deoxy-alpha-D-manno-oct-2-ulosonate + CTP = CMP-3-deoxy-beta-D-manno-octulosonate + diphosphate. Its pathway is nucleotide-sugar biosynthesis; CMP-3-deoxy-D-manno-octulosonate biosynthesis; CMP-3-deoxy-D-manno-octulosonate from 3-deoxy-D-manno-octulosonate and CTP: step 1/1. It participates in bacterial outer membrane biogenesis; lipopolysaccharide biosynthesis. Its function is as follows. Activates KDO (a required 8-carbon sugar) for incorporation into bacterial lipopolysaccharide in Gram-negative bacteria. In Alkalilimnicola ehrlichii (strain ATCC BAA-1101 / DSM 17681 / MLHE-1), this protein is 3-deoxy-manno-octulosonate cytidylyltransferase.